The following is a 1082-amino-acid chain: Error-prone DNA polymerase (1082 aa).

The protein belongs to the DNA polymerase type-C family. DnaE2 subfamily.

It localises to the cytoplasm. The enzyme catalyses DNA(n) + a 2'-deoxyribonucleoside 5'-triphosphate = DNA(n+1) + diphosphate. Functionally, DNA polymerase involved in damage-induced mutagenesis and translesion synthesis (TLS). It is not the major replicative DNA polymerase. This Xanthomonas campestris pv. campestris (strain 8004) protein is Error-prone DNA polymerase.